The sequence spans 118 residues: M-zodatoxin-Lt8p (118 aa).

The N-terminal stretch at 1-3 (AES) is a signal peptide. Positions 4–43 (KPAESEHELAEVEEENELADLEDAVWLEHLADLSDLEEAR) are excised as a propeptide.

This sequence belongs to the cationic peptide 06 (cytoinsectotoxin) family. As to expression, expressed by the venom gland.

It is found in the secreted. In terms of biological role, insecticidal, cytolytic and antimicrobial peptide. Forms voltage-dependent, ion-permeable channels in membranes. At high concentration causes cell membrane lysis. This Lachesana tarabaevi (Spider) protein is M-zodatoxin-Lt8p (cit 1-15).